A 764-amino-acid polypeptide reads, in one-letter code: Protein translocase subunit SecA 2 (764 aa).

Residues Gln83, 101 to 105 (GEGKT), and Asp490 each bind ATP.

Belongs to the SecA family. As to quaternary structure, monomer and homodimer. Part of the essential Sec protein translocation apparatus which comprises SecA, SecYEG and auxiliary proteins SecDF. Other proteins may also be involved.

It is found in the cell membrane. The protein resides in the cytoplasm. The enzyme catalyses ATP + H2O + cellular proteinSide 1 = ADP + phosphate + cellular proteinSide 2.. In terms of biological role, part of the Sec protein translocase complex. Interacts with the SecYEG preprotein conducting channel. Has a central role in coupling the hydrolysis of ATP to the transfer of proteins into and across the cell membrane, serving as an ATP-driven molecular motor driving the stepwise translocation of polypeptide chains across the membrane. The sequence is that of Protein translocase subunit SecA 2 from Corynebacterium diphtheriae (strain ATCC 700971 / NCTC 13129 / Biotype gravis).